Consider the following 238-residue polypeptide: 3-dehydroquinate dehydratase (238 aa).

3-dehydroquinate is bound by residues 35 to 37 (ELR) and arginine 70. Histidine 133 acts as the Proton donor/acceptor in catalysis. Lysine 160 acts as the Schiff-base intermediate with substrate in catalysis. Positions 202 and 225 each coordinate 3-dehydroquinate.

Belongs to the type-I 3-dehydroquinase family. In terms of assembly, homodimer.

It carries out the reaction 3-dehydroquinate = 3-dehydroshikimate + H2O. It participates in metabolic intermediate biosynthesis; chorismate biosynthesis; chorismate from D-erythrose 4-phosphate and phosphoenolpyruvate: step 3/7. Functionally, involved in the third step of the chorismate pathway, which leads to the biosynthesis of aromatic amino acids. Catalyzes the cis-dehydration of 3-dehydroquinate (DHQ) and introduces the first double bond of the aromatic ring to yield 3-dehydroshikimate. In Staphylococcus aureus (strain bovine RF122 / ET3-1), this protein is 3-dehydroquinate dehydratase.